The following is a 359-amino-acid chain: 3-dehydroquinate synthase (359 aa).

Residues 71 to 76 (DGEQFK), 105 to 109 (GVIGD), 129 to 130 (TT), K142, K151, and 169 to 172 (CLHT) each bind NAD(+). Zn(2+) contacts are provided by E184, H247, and H264.

Belongs to the sugar phosphate cyclases superfamily. Dehydroquinate synthase family. Co(2+) is required as a cofactor. Zn(2+) serves as cofactor. Requires NAD(+) as cofactor.

The protein resides in the cytoplasm. The catalysed reaction is 7-phospho-2-dehydro-3-deoxy-D-arabino-heptonate = 3-dehydroquinate + phosphate. The protein operates within metabolic intermediate biosynthesis; chorismate biosynthesis; chorismate from D-erythrose 4-phosphate and phosphoenolpyruvate: step 2/7. In terms of biological role, catalyzes the conversion of 3-deoxy-D-arabino-heptulosonate 7-phosphate (DAHP) to dehydroquinate (DHQ). In Shewanella putrefaciens (strain CN-32 / ATCC BAA-453), this protein is 3-dehydroquinate synthase.